Here is a 231-residue protein sequence, read N- to C-terminus: uncharacterized protein (231 aa).

Residues 1–19 (MKFKFLLTPLLSSVLFLSA) form the signal peptide. Cysteine 20 carries the N-palmitoyl cysteine lipid modification. A lipid anchor (S-diacylglycerol cysteine) is attached at cysteine 20.

The protein belongs to the MG439/MG440 family.

It localises to the cell membrane. This is an uncharacterized protein from Mycoplasma pneumoniae (strain ATCC 29342 / M129 / Subtype 1) (Mycoplasmoides pneumoniae).